The sequence spans 415 residues: Casein kinase I isoform delta (415 aa).

In terms of domain architecture, Protein kinase spans 9 to 277 (YRLGRKIGSG…YLRQLFRNLF (269 aa)). ATP is bound by residues 15-23 (IGSGSFGDI) and Lys-38. Asp-128 acts as the Proton acceptor in catalysis. The segment covering 301–315 (AEDAERERREREERL) has biased composition (basic and acidic residues). Positions 301-415 (AEDAERERRE…SSGLPSTVHR (115 aa)) are disordered. Residues 317–342 (HTRNPAVRGLPSTASGRLRGTQEVTP) form an autoinhibitory region. Over residues 341 to 352 (TPSTPLTPTSHT) the composition is skewed to low complexity. Residues 380–415 (NVSSSDLTSRQDTSRMSTSQIPSRVTSSGLPSTVHR) are compositionally biased toward polar residues.

This sequence belongs to the protein kinase superfamily. As to quaternary structure, monomer. Interacts with per1 and per2. Component of the circadian core oscillator. Autophosphorylated on serine and threonine residues. In terms of tissue distribution, detected in retina photoreceptor cells.

It localises to the cytoplasm. Its subcellular location is the nucleus. It carries out the reaction L-seryl-[protein] + ATP = O-phospho-L-seryl-[protein] + ADP + H(+). The enzyme catalyses L-threonyl-[protein] + ATP = O-phospho-L-threonyl-[protein] + ADP + H(+). It catalyses the reaction L-seryl-[tau protein] + ATP = O-phospho-L-seryl-[tau protein] + ADP + H(+). The catalysed reaction is L-threonyl-[tau protein] + ATP = O-phospho-L-threonyl-[tau protein] + ADP + H(+). With respect to regulation, exhibits substrate-dependent heparin activation. Casein kinases are operationally defined by their preferential utilization of acidic proteins such as caseins as substrates. Can phosphorylate a large number of proteins. Central component of the circadian clock. May act as a negative regulator of circadian rhythmicity by phosphorylating per1 and per2, which may lead to their degradation. Participates in wnt signaling. Functionally, has no kinase activity. This is Casein kinase I isoform delta (csnk1d) from Xenopus laevis (African clawed frog).